The sequence spans 335 residues: Dihydroorotate dehydrogenase (quinone) (335 aa).

FMN contacts are provided by residues 61–65 (AGLDK) and T85. K65 serves as a coordination point for substrate. Position 110–114 (110–114 (NRMGF)) interacts with substrate. FMN is bound by residues N138 and N171. N171 contacts substrate. The active-site Nucleophile is S174. N176 contributes to the substrate binding site. FMN-binding residues include K216 and T244. 245 to 246 (NT) is a binding site for substrate. FMN is bound by residues G267, G296, and 317-318 (YS).

Belongs to the dihydroorotate dehydrogenase family. Type 2 subfamily. As to quaternary structure, monomer. It depends on FMN as a cofactor.

Its subcellular location is the cell membrane. The enzyme catalyses (S)-dihydroorotate + a quinone = orotate + a quinol. Its pathway is pyrimidine metabolism; UMP biosynthesis via de novo pathway; orotate from (S)-dihydroorotate (quinone route): step 1/1. In terms of biological role, catalyzes the conversion of dihydroorotate to orotate with quinone as electron acceptor. This chain is Dihydroorotate dehydrogenase (quinone), found in Pseudoalteromonas atlantica (strain T6c / ATCC BAA-1087).